Consider the following 486-residue polypeptide: Ribosomal RNA small subunit methyltransferase F (486 aa).

Residues 124 to 130 (ASAPGSK), E148, D175, and D193 contribute to the S-adenosyl-L-methionine site. Residue C246 is the Nucleophile of the active site.

Belongs to the class I-like SAM-binding methyltransferase superfamily. RsmB/NOP family.

The protein localises to the cytoplasm. The enzyme catalyses cytidine(1407) in 16S rRNA + S-adenosyl-L-methionine = 5-methylcytidine(1407) in 16S rRNA + S-adenosyl-L-homocysteine + H(+). In terms of biological role, specifically methylates the cytosine at position 1407 (m5C1407) of 16S rRNA. This Shewanella baltica (strain OS223) protein is Ribosomal RNA small subunit methyltransferase F.